The chain runs to 103 residues: Large ribosomal subunit protein uL23 (103 aa).

It belongs to the universal ribosomal protein uL23 family. As to quaternary structure, part of the 50S ribosomal subunit. Contacts protein L29, and trigger factor when it is bound to the ribosome.

Functionally, one of the early assembly proteins it binds 23S rRNA. One of the proteins that surrounds the polypeptide exit tunnel on the outside of the ribosome. Forms the main docking site for trigger factor binding to the ribosome. The polypeptide is Large ribosomal subunit protein uL23 (Chlorobium luteolum (strain DSM 273 / BCRC 81028 / 2530) (Pelodictyon luteolum)).